The primary structure comprises 349 residues: ATP phosphoribosyltransferase regulatory subunit (349 aa).

Residues 327–349 form a disordered region; it reads GRGRGVRPRRASARGGRARARPR. The segment covering 330-349 has biased composition (basic residues); it reads RGVRPRRASARGGRARARPR.

This sequence belongs to the class-II aminoacyl-tRNA synthetase family. HisZ subfamily. As to quaternary structure, heteromultimer composed of HisG and HisZ subunits.

It localises to the cytoplasm. It functions in the pathway amino-acid biosynthesis; L-histidine biosynthesis; L-histidine from 5-phospho-alpha-D-ribose 1-diphosphate: step 1/9. Its function is as follows. Required for the first step of histidine biosynthesis. May allow the feedback regulation of ATP phosphoribosyltransferase activity by histidine. This Anaeromyxobacter sp. (strain K) protein is ATP phosphoribosyltransferase regulatory subunit.